Reading from the N-terminus, the 493-residue chain is Amphoterin-induced protein 1 (493 aa).

A signal peptide spans 1–27; it reads MQPQRDLRGLWLLLLSLFLLLFEVARA. The LRRNT domain occupies 28 to 61; the sequence is GRPVVSCPANCLCASNILSCSKQQLPNVPQSLPG. Residues 28–372 are Extracellular-facing; the sequence is GRPVVSCPAN…LHGHHDTLNT (345 aa). 2 cysteine pairs are disulfide-bonded: cysteine 34/cysteine 40 and cysteine 38/cysteine 47. 6 LRR repeats span residues 62-83, 87-108, 111-132, 135-156, 159-179, and 186-206; these read YTAL…WTPT, NLHS…AFVP, NLRY…LFSG, ALEV…AFED, QLQK…ELIK, and KLTL…TDLQ. Residue asparagine 72 is glycosylated (N-linked (GlcNAc...) asparagine). The region spanning 221-272 is the LRRCT domain; that stretch reads NPLECDCKLYQLFSHWQYRQLSSVMDFQEDLYCVHSKKLHNVFSLDFFNCSE. 3 disulfides stabilise this stretch: cysteine 225–cysteine 253, cysteine 227–cysteine 270, and cysteine 290–cysteine 341. Asparagine 269, asparagine 315, asparagine 349, and asparagine 360 each carry an N-linked (GlcNAc...) asparagine glycan. Residues 269–353 enclose the Ig-like C2-type domain; it reads NCSEYKESAW…MGETFNETLS (85 aa). Residues 373–393 form a helical membrane-spanning segment; sequence AYTTLVGCILSVVLVLIYLYL. Residues 394–493 lie on the Cytoplasmic side of the membrane; it reads TPCRCWCRGV…SVFSDTPIVV (100 aa). Residues 405–493 form a disordered region; sequence KPSSHQGDSL…SVFSDTPIVV (89 aa). Residues 408–424 show a composition bias toward polar residues; the sequence is SHQGDSLSSSMLSTTPN. Residues 431 to 442 show a composition bias toward basic and acidic residues; it reads GDKDDGFDRRVA. A phosphoserine mark is found at serine 477 and serine 481.

This sequence belongs to the immunoglobulin superfamily. AMIGO family. As to quaternary structure, homodimer, and heterodimer with AMIGO2 and AMIGO3. Interacts with KCNB1.

Its subcellular location is the cell membrane. The protein localises to the perikaryon. It is found in the cell projection. The protein resides in the dendrite. It localises to the axon. Functionally, promotes growth and fasciculation of neurites from cultured hippocampal neurons. May be involved in fasciculation as well as myelination of developing neural axons. May have a role in regeneration as well as neural plasticity in the adult nervous system. May mediate homophilic as well as heterophilic cell-cell interaction and contribute to signal transduction through its intracellular domain. Assembled with KCNB1 modulates the gating characteristics of the delayed rectifier voltage-dependent potassium channel KCNB1. The sequence is that of Amphoterin-induced protein 1 from Rattus norvegicus (Rat).